Reading from the N-terminus, the 121-residue chain is Small ribosomal subunit protein uS13 (121 aa).

Positions 94-121 (GLPLRGQRTRTNARTRKGPRKAGVALKK) are disordered.

This sequence belongs to the universal ribosomal protein uS13 family. Part of the 30S ribosomal subunit. Forms a loose heterodimer with protein S19. Forms two bridges to the 50S subunit in the 70S ribosome.

Functionally, located at the top of the head of the 30S subunit, it contacts several helices of the 16S rRNA. In the 70S ribosome it contacts the 23S rRNA (bridge B1a) and protein L5 of the 50S subunit (bridge B1b), connecting the 2 subunits; these bridges are implicated in subunit movement. Contacts the tRNAs in the A and P-sites. In Ralstonia nicotianae (strain ATCC BAA-1114 / GMI1000) (Ralstonia solanacearum), this protein is Small ribosomal subunit protein uS13.